The sequence spans 104 residues: DNA-directed RNA polymerase subunit omega (104 aa).

This sequence belongs to the RNA polymerase subunit omega family. In terms of assembly, the RNAP catalytic core consists of 2 alpha, 1 beta, 1 beta' and 1 omega subunit. When a sigma factor is associated with the core the holoenzyme is formed, which can initiate transcription.

It catalyses the reaction RNA(n) + a ribonucleoside 5'-triphosphate = RNA(n+1) + diphosphate. Functionally, promotes RNA polymerase assembly. Latches the N- and C-terminal regions of the beta' subunit thereby facilitating its interaction with the beta and alpha subunits. In Streptococcus suis (strain 05ZYH33), this protein is DNA-directed RNA polymerase subunit omega.